A 176-amino-acid chain; its full sequence is Ribosome rescue factor SmrB (176 aa).

The Smr domain maps to Leu93 to Asp168.

The protein belongs to the SmrB family. Associates with collided ribosomes, but not with correctly translating polysomes.

In terms of biological role, acts as a ribosome collision sensor. Detects stalled/collided disomes (pairs of ribosomes where the leading ribosome is stalled and a second ribosome has collided with it) and endonucleolytically cleaves mRNA at the 5' boundary of the stalled ribosome. Stalled/collided disomes form a new interface (primarily via the 30S subunits) that binds SmrB. Cleaved mRNA becomes available for tmRNA ligation, leading to ribosomal subunit dissociation and rescue of stalled ribosomes. The sequence is that of Ribosome rescue factor SmrB from Shewanella putrefaciens (strain CN-32 / ATCC BAA-453).